A 297-amino-acid polypeptide reads, in one-letter code: Homoserine kinase (297 aa).

An ATP-binding site is contributed by 82–92; sequence PVSRGLGSSAA.

This sequence belongs to the GHMP kinase family. Homoserine kinase subfamily.

It is found in the cytoplasm. It carries out the reaction L-homoserine + ATP = O-phospho-L-homoserine + ADP + H(+). The protein operates within amino-acid biosynthesis; L-threonine biosynthesis; L-threonine from L-aspartate: step 4/5. In terms of biological role, catalyzes the ATP-dependent phosphorylation of L-homoserine to L-homoserine phosphate. This Clostridium botulinum (strain ATCC 19397 / Type A) protein is Homoserine kinase.